The following is a 238-amino-acid chain: Ribose-5-phosphate isomerase A (238 aa).

Substrate contacts are provided by residues 30–33 (SGST), 87–90 (DGAD), and 100–103 (KGGG). Catalysis depends on glutamate 109, which acts as the Proton acceptor. Substrate is bound at residue lysine 127.

This sequence belongs to the ribose 5-phosphate isomerase family. In terms of assembly, homodimer.

It catalyses the reaction aldehydo-D-ribose 5-phosphate = D-ribulose 5-phosphate. It functions in the pathway carbohydrate degradation; pentose phosphate pathway; D-ribose 5-phosphate from D-ribulose 5-phosphate (non-oxidative stage): step 1/1. In terms of biological role, catalyzes the reversible conversion of ribose-5-phosphate to ribulose 5-phosphate. In Prochlorococcus marinus (strain MIT 9303), this protein is Ribose-5-phosphate isomerase A.